A 201-amino-acid chain; its full sequence is Pyridoxal 5'-phosphate synthase subunit PdxT (201 aa).

49-51 (GES) is an L-glutamine binding site. The active-site Nucleophile is Cys81. L-glutamine-binding positions include Arg110 and 139 to 140 (IR). Catalysis depends on charge relay system residues His180 and Glu182.

Belongs to the glutaminase PdxT/SNO family. In the presence of PdxS, forms a dodecamer of heterodimers. Only shows activity in the heterodimer.

The catalysed reaction is aldehydo-D-ribose 5-phosphate + D-glyceraldehyde 3-phosphate + L-glutamine = pyridoxal 5'-phosphate + L-glutamate + phosphate + 3 H2O + H(+). It carries out the reaction L-glutamine + H2O = L-glutamate + NH4(+). It functions in the pathway cofactor biosynthesis; pyridoxal 5'-phosphate biosynthesis. Catalyzes the hydrolysis of glutamine to glutamate and ammonia as part of the biosynthesis of pyridoxal 5'-phosphate. The resulting ammonia molecule is channeled to the active site of PdxS. This Salinispora arenicola (strain CNS-205) protein is Pyridoxal 5'-phosphate synthase subunit PdxT.